Consider the following 292-residue polypeptide: uncharacterized protein (292 aa).

The helical transmembrane segment at 17–37 (SMDMFFFLFIFLLFIYPEMMM) threads the bilayer.

To M.jannaschii MJ0137.

Its subcellular location is the membrane. This is an uncharacterized protein from Methanocaldococcus jannaschii (strain ATCC 43067 / DSM 2661 / JAL-1 / JCM 10045 / NBRC 100440) (Methanococcus jannaschii).